Reading from the N-terminus, the 1070-residue chain is MRSIKAASLTPLLAALFTTLSSTLALPSSVWEHQLETNVLALRDTNNNGSSSTISPSFDVTKCPGYKLVGQPQQSQHGFTAQLSLAGDACNAYGVDIANLTLSVVYEKQHQLHVHIYDTAKQQYQLPNGLIFDRPGDNPADIQNGSTADQSDLVFHHTAENGTQSGNGGWAFWIARKSSGDVIFDTRASNIPTYNDGLSSVSSNTKRNTTAMPAHEMVFENQYLQISSALPTGANIYGLGEYVTGSFRRNPDETLQPFFTLDAGTPVDSNMYGYHPIYTEARRGSDGKLRTHSVHLQNTAGMDVLLRRGVIQYRAIGGTLDFRFFSGDQPASSSSSSSGNDKAVATVKNSPNTAIQQYVNFIGNPVIHPYWSYGFHLCRWGYNNVSETQAVIDAMRQNNIPLEVQWNDIDYLQEFRDFTTDPQRFPQKEFAAMIAKLKDNHQHYIPIIDMAIPKAPTNDTDVYYPGTRGDELDVFIKNRNGSQYIGEVWPGYTNFVDQQAENAGKWWTEAIRNFSEIVDFSGIWLDMNEPSSFVIGNAAGPETNLSNTPAYTAATSVAGWPQGYNNLTWGTSGNITVNGSYTYQQGPVQNNDGSKQRRSLLLSRDEDVLVQRDINVNGGNGDKFGPEDPNYQYANSSQRYLSNPPYAIHNGIHISETPLNVNLDKKTVAMEAVGVDGQRAFYDVHNLDGTLEEQHFYNALRDIRPQERPFLISRSTYPGAGKFTGHWLGDNYALWTILPGEEAYKAGAGMAQSIDGVLQFQIFGIHLIGADICGFNRNSDEELCNRWMMLGAFLPFMRNHNTIGAIAQEPFRWDSVANASRIAINKRYEILPSLYSHMAQSAESGEPAVRALWYEFDEVFEQTKDYAHQFLFGDDLLVSPVLEPNVTQIKALFPNAGGKWRNVFSYEALDVEYNKNVTVDAALSTINVHLRPGKVLLTHSKPAYTVYETAQSPYGLIVNLNDQGEAKQTFYLDDGMTPAPTPNSTLTVSAGNNSVNGSIEGEYKAQQNLTYVVVLDVKQKPTQVMMGGNKTEFSWDQQKTLLNVTGLNADLNGSGRFRGLRLELSLLCED.

An N-terminal signal peptide occupies residues 1 to 35 (MRSIKAASLTPLLAALFTTLSSTLALPSSVWEHQL). Asparagine 48, asparagine 99, asparagine 144, asparagine 161, asparagine 208, asparagine 384, asparagine 458, asparagine 480, and asparagine 513 each carry an N-linked (GlcNAc...) asparagine glycan. The active-site Nucleophile is the aspartate 526. Residue glutamate 529 is part of the active site. N-linked (GlcNAc...) asparagine glycans are attached at residues asparagine 544, asparagine 566, asparagine 574, asparagine 578, and asparagine 635. Aspartate 730 (proton donor) is an active-site residue. 10 N-linked (GlcNAc...) asparagine glycosylation sites follow: asparagine 818, asparagine 885, asparagine 916, asparagine 983, asparagine 992, asparagine 996, asparagine 1008, asparagine 1029, asparagine 1043, and asparagine 1052.

The protein belongs to the glycosyl hydrolase 31 family.

It carries out the reaction Hydrolysis of terminal, non-reducing (1-&gt;4)-linked alpha-D-glucose residues with release of alpha-D-glucose.. Hydrolyzes a broad range of alpha-D-linked glucopyranosides, including maltose (alpha-1,4), sucrose (alpha-1,2), isomaltose (alpha-1,6) and turanose (alpha-1,3). This is Alpha-glucosidase from Candida tsukubaensis (Yeast).